Consider the following 160-residue polypeptide: Ribosomal RNA large subunit methyltransferase H (160 aa).

S-adenosyl-L-methionine-binding positions include Leu-76, Gly-108, and 127–132 (LGKMTW).

The protein belongs to the RNA methyltransferase RlmH family. Homodimer.

It localises to the cytoplasm. It carries out the reaction pseudouridine(1915) in 23S rRNA + S-adenosyl-L-methionine = N(3)-methylpseudouridine(1915) in 23S rRNA + S-adenosyl-L-homocysteine + H(+). Specifically methylates the pseudouridine at position 1915 (m3Psi1915) in 23S rRNA. The protein is Ribosomal RNA large subunit methyltransferase H of Rhizobium etli (strain ATCC 51251 / DSM 11541 / JCM 21823 / NBRC 15573 / CFN 42).